Consider the following 306-residue polypeptide: tRNA pseudouridine synthase B (306 aa).

Asp43 serves as the catalytic Nucleophile.

This sequence belongs to the pseudouridine synthase TruB family. Type 1 subfamily.

It catalyses the reaction uridine(55) in tRNA = pseudouridine(55) in tRNA. Responsible for synthesis of pseudouridine from uracil-55 in the psi GC loop of transfer RNAs. This is tRNA pseudouridine synthase B from Heliobacterium modesticaldum (strain ATCC 51547 / Ice1).